The chain runs to 189 residues: uncharacterized protein (189 aa).

This is an uncharacterized protein from Saccharomyces cerevisiae (strain ATCC 204508 / S288c) (Baker's yeast).